The following is a 432-amino-acid chain: Adenylosuccinate synthetase (432 aa).

Residues 13 to 19 and 41 to 43 contribute to the GTP site; these read GDEGKGK and GHT. The Proton acceptor role is filled by Asp-14. Positions 14 and 41 each coordinate Mg(2+). Residues 14–17, 39–42, Thr-130, Arg-144, Gln-225, Thr-240, and Arg-304 contribute to the IMP site; these read DEGK and NAGH. His-42 (proton donor) is an active-site residue. A substrate-binding site is contributed by 300-306; sequence ATTGRKR. GTP contacts are provided by residues Arg-306, 332 to 334, and 415 to 417; these read KLD and STG.

It belongs to the adenylosuccinate synthetase family. As to quaternary structure, homodimer. Mg(2+) serves as cofactor.

Its subcellular location is the cytoplasm. It carries out the reaction IMP + L-aspartate + GTP = N(6)-(1,2-dicarboxyethyl)-AMP + GDP + phosphate + 2 H(+). Its pathway is purine metabolism; AMP biosynthesis via de novo pathway; AMP from IMP: step 1/2. Plays an important role in the de novo pathway of purine nucleotide biosynthesis. Catalyzes the first committed step in the biosynthesis of AMP from IMP. In Photobacterium profundum (strain SS9), this protein is Adenylosuccinate synthetase.